We begin with the raw amino-acid sequence, 426 residues long: DUF724 domain-containing protein 9 (426 aa).

2 stretches are compositionally biased toward polar residues: residues E164–E184 and P213–D222. The tract at residues E164–S248 is disordered. Positions S223–S242 are enriched in basic and acidic residues. Residues L256 to P425 form the DUF724 domain. Positions A370–S402 form a coiled coil.

In terms of tissue distribution, expressed in flowers.

The protein localises to the nucleus. Functionally, may be involved in the polar growth of plant cells via transportation of RNAs. This is DUF724 domain-containing protein 9 from Arabidopsis thaliana (Mouse-ear cress).